The chain runs to 374 residues: METKYHEYDDVQTKDTPSNKYSLNENRGDLIFLIMEIIGESCNSIYDSFTLDAPQFAFRGIDKTLSKDGEIGKLITIIKNLIKEQSYLLKSPMTNNNNNNNNNNNNNNNNNNNNNNNNNNNNNNNNNNNNNNNNNSYNNNNINDNNNSSNNNNNNLEYNTKGGEYISSNQSSPLSIYSTPPNPSSYVSSPLNQPANNTEAFQINGNELDAAQIKIKQLELELQKFKEAGALFAMNKINNSSAPPPPPKACAPPPPPPPPPPITVVKQPSFLMKKGVNNNNNNNNNNNSSNTNDSNNTNNTKPQPTFNFADVLLNRPQLKRVSKDRSPGGTPAKEPKNKSGSVEDALLKAIVSKFKHANSSPVKSHDDSSDSDFE.

Residues 1-13 show a composition bias toward basic and acidic residues; the sequence is METKYHEYDDVQT. 3 disordered regions span residues 1–20, 91–193, and 236–374; these read METK…PSNK, SPMT…PLNQ, and KINN…SDFE. Residues 95–155 show a composition bias toward low complexity; sequence NNNNNNNNNN…NNSSNNNNNN (61 aa). The segment covering 166–193 has biased composition (polar residues); the sequence is ISSNQSSPLSIYSTPPNPSSYVSSPLNQ. Positions 242–262 are enriched in pro residues; it reads APPPPPKACAPPPPPPPPPPI. A compositionally biased stretch (low complexity) spans 277-300; it reads NNNNNNNNNNNSSNTNDSNNTNNT.

This is an uncharacterized protein from Dictyostelium discoideum (Social amoeba).